The primary structure comprises 512 residues: Glutamyl-tRNA(Gln) amidotransferase subunit A (512 aa).

Residues lysine 82 and serine 157 each act as charge relay system in the active site. The active-site Acyl-ester intermediate is the serine 181.

This sequence belongs to the amidase family. GatA subfamily. In terms of assembly, heterotrimer of A, B and C subunits.

It carries out the reaction L-glutamyl-tRNA(Gln) + L-glutamine + ATP + H2O = L-glutaminyl-tRNA(Gln) + L-glutamate + ADP + phosphate + H(+). Allows the formation of correctly charged Gln-tRNA(Gln) through the transamidation of misacylated Glu-tRNA(Gln) in organisms which lack glutaminyl-tRNA synthetase. The reaction takes place in the presence of glutamine and ATP through an activated gamma-phospho-Glu-tRNA(Gln). This Bordetella pertussis (strain Tohama I / ATCC BAA-589 / NCTC 13251) protein is Glutamyl-tRNA(Gln) amidotransferase subunit A.